The sequence spans 71 residues: uncharacterized protein (71 aa).

Residues 15–71 enclose the Sm domain; sequence PNFEYARRLNGKKVKIFLRNGEVLDAEVTGVSNYEIMVKVGDRNLLVFKHAIDYIEY.

This is an uncharacterized protein from Methanocaldococcus jannaschii (strain ATCC 43067 / DSM 2661 / JAL-1 / JCM 10045 / NBRC 100440) (Methanococcus jannaschii).